A 971-amino-acid polypeptide reads, in one-letter code: Zinc finger CCCH domain-containing protein 7A (971 aa).

TPR repeat units lie at residues 43–76 (VRNL…ADYA), 89–122 (EKLY…NASN), and 124–156 (KALY…VPQD). Phosphothreonine is present on T210. C3H1-type zinc fingers lie at residues 634 to 656 (LCRH…HSLV) and 769 to 797 (PLQF…HSPE). The C2H2-type zinc finger occupies 857–881 (FHCWMCGKNCNSEKQWQGHISSEKH). Residues 906–928 (ICDRYMNGTCPEGNSCKFAHGNA) form a C3H1-type 3 zinc finger. Residues 924–952 (AHGNAELHEWEERRDALKMKLNKARKDHL) are a coiled coil.

Its subcellular location is the nucleus. May be a specific regulator of miRNA biogenesis. Binds to microRNAs MIR7-1, MIR16-2 and MIR29A hairpins recognizing the 3'-ATA(A/T)-5' motif in the apical loop. The chain is Zinc finger CCCH domain-containing protein 7A (ZC3H7A) from Homo sapiens (Human).